Reading from the N-terminus, the 529-residue chain is MTLSPYLQEVAKRRTFAIISHPDAGKTTITEKVLLFGQAIQTAGTVKGRGSNQHAKSDWMEMEKQRGISITTSVMQFPYHDCLVNLLDTPGHEDFSEDTYRTLTAVDCCLMVIDAAKGVEDRTRKLMEVTRLRDTPILTFMNKLDRDIRDPMELLDEVENELKIGCAPITWPIGCGKLFKGVYHLYKDETYLYQSGKGHTIQEVRIVKGLNNPDLDAAVGEDLAQQLRDELELVKGASNEFDKELFLAGEITPVFFGTALGNFGVDHMLDGLVEWAPAPMPRQTDTRTVQASEDKFTGFVFKIQANMDPKHRDRVAFMRVVSGKYEKGMKLRQVRTAKDVVISDALTFMAGDRSHVEEAYPGDILGLHNHGTIQIGDTFTQGEMMKFTGIPNFAPELFRRIRLKDPLKQKQLLKGLVQLSEEGAVQVFRPISNNDLIVGAVGVLQFDVVVSRLKSEYNVEAVYESVNVATARWVECADAKKFEEFKRKNESQLALDGGDNLAYIATSMVNLRLAQERYPDVQFHQTREH.

A tr-type G domain is found at 11-280 (AKRRTFAIIS…GLVEWAPAPM (270 aa)). GTP is bound by residues 20–27 (SHPDAGKT), 88–92 (DTPGH), and 142–145 (NKLD).

This sequence belongs to the TRAFAC class translation factor GTPase superfamily. Classic translation factor GTPase family. PrfC subfamily.

The protein resides in the cytoplasm. Increases the formation of ribosomal termination complexes and stimulates activities of RF-1 and RF-2. It binds guanine nucleotides and has strong preference for UGA stop codons. It may interact directly with the ribosome. The stimulation of RF-1 and RF-2 is significantly reduced by GTP and GDP, but not by GMP. The sequence is that of Peptide chain release factor 3 from Escherichia coli O8 (strain IAI1).